Here is a 230-residue protein sequence, read N- to C-terminus: DNA repair protein rdl1 (230 aa).

Interacts with rlp1 and sws1.

The protein localises to the cytoplasm. Its subcellular location is the nucleus. In terms of biological role, involved in homologous recombination where it functions at an early stage of recombination in a pre-recombinogenic complex with rlp1 and sws1. Also has a role at a later stage of recombination in association with the rhp55-rhp57 complex. The polypeptide is DNA repair protein rdl1 (rdl1) (Schizosaccharomyces pombe (strain 972 / ATCC 24843) (Fission yeast)).